Consider the following 627-residue polypeptide: Coiled-coil domain-containing protein 22 (627 aa).

The tract at residues 1 to 321 is sufficient for interaction with COMMD1; that stretch reads MEEADRILIH…VSDVPATSRR (321 aa). The tract at residues 1–447 is sufficicient and required for interaction with CCDC93; it reads MEEADRILIH…LQDCRELESS (447 aa). Residues 218–243 form a disordered region; the sequence is TGRDRPGDEDWVHRTSRLPPQEDTRA. Basic and acidic residues predominate over residues 219–230; it reads GRDRPGDEDWVH. Positions 320 to 627 form a coiled coil; that stretch reads RRPEQVTWAA…AGLLGRVREA (308 aa). Residue Ser-410 is modified to Phosphoserine.

It belongs to the CCDC22 family. As to quaternary structure, component of the commander complex consisting of the CCC subcomplex and the retriever subcomplex. Component of the CCC (COMMD/CCDC22/CCDC93) subcomplex consisting of COMMD1, COMMD2, COMMD3, COMMD4, COMMD5, COMMD6, COMMD7, COMMD8, COMMD9, COMMD10, CCDC22 and CCDC93. Forms a coiled-coil heterodimer with CCDC22; this heterodimer interacts with the guanine nucleotide exchange factor DENND10; the interaction is direct. Interacts with CUL1, CUL2, CUL3, SKP1, BTRC. Interacts with SNX17 and SNX31. Interacts with CPNE1 and CPNE4. In terms of tissue distribution, widely expressed in adult tissues and in fetal liver and brain, with highest levels in prostate and lowest in skeletal muscle.

It localises to the endosome. Its subcellular location is the cytoplasm. It is found in the cytoskeleton. The protein resides in the microtubule organizing center. The protein localises to the centrosome. Functionally, component of the commander complex that is essential for endosomal recycling of transmembrane cargos; the Commander complex is composed of composed of the CCC subcomplex and the retriever subcomplex. Component of the CCC complex, which is involved in the regulation of endosomal recycling of surface proteins, including integrins, signaling receptor and channels. Involved in regulation of NF-kappa-B signaling. Promotes ubiquitination of I-kappa-B-kinase subunit IKBKB and its subsequent proteasomal degradation leading to NF-kappa-B activation; the function may involve association with COMMD8 and a CUL1-dependent E3 ubiquitin ligase complex. May down-regulate NF-kappa-B activity via association with COMMD1 and involving a CUL2-dependent E3 ubiquitin ligase complex. Regulates the cellular localization of COMM domain-containing proteins, such as COMMD1 and COMMD10. Component of the CCC complex, which is involved in the regulation of endosomal recycling of surface proteins, including integrins, signaling receptor and channels. The CCC complex associates with SNX17, retriever and WASH complexes to prevent lysosomal degradation and promote cell surface recycling of numerous cargos such as integrins ITGA5:ITGB1. Plays a role in copper ion homeostasis. Involved in copper-dependent ATP7A trafficking between the trans-Golgi network and vesicles in the cell periphery; the function is proposed to depend on its association within the CCC complex and cooperation with the WASH complex on early endosomes. Its function is as follows. (Microbial infection) The CCC complex, in collaboration with the heterotrimeric retriever complex, mediates the exit of human papillomavirus to the cell surface. This chain is Coiled-coil domain-containing protein 22 (CCDC22), found in Homo sapiens (Human).